We begin with the raw amino-acid sequence, 882 residues long: Valine--tRNA ligase (882 aa).

A 'HIGH' region motif is present at residues 45-55; that stretch reads PNVTGKLHLGH. Positions 519–523 match the 'KMSKS' region motif; the sequence is KMSKS. Position 522 (Lys-522) interacts with ATP. A coiled-coil region spans residues 808–882; that stretch reads LADLLNVEEE…RIAEMHKLVK (75 aa).

The protein belongs to the class-I aminoacyl-tRNA synthetase family. ValS type 1 subfamily. In terms of assembly, monomer.

The protein localises to the cytoplasm. The catalysed reaction is tRNA(Val) + L-valine + ATP = L-valyl-tRNA(Val) + AMP + diphosphate. Functionally, catalyzes the attachment of valine to tRNA(Val). As ValRS can inadvertently accommodate and process structurally similar amino acids such as threonine, to avoid such errors, it has a 'posttransfer' editing activity that hydrolyzes mischarged Thr-tRNA(Val) in a tRNA-dependent manner. This Streptococcus pyogenes serotype M18 (strain MGAS8232) protein is Valine--tRNA ligase.